Consider the following 273-residue polypeptide: Outer surface protein A (273 aa).

The signal sequence occupies residues 1-16 (MKKYLLGIGLILALIA). A lipid anchor (N-palmitoyl cysteine) is attached at cysteine 17. Cysteine 17 carries S-diacylglycerol cysteine lipidation.

It belongs to the OspA lipoprotein family.

The protein resides in the cell outer membrane. It is found in the cell surface. Induces host (human and mouse) cytokine release by monocyte cell lines via TLR2 and CD14; nonlipidated protein does not stimulate host cells. This is Outer surface protein A from Borreliella burgdorferi (strain ATCC 35210 / DSM 4680 / CIP 102532 / B31) (Borrelia burgdorferi).